We begin with the raw amino-acid sequence, 343 residues long: N-acetyl-gamma-glutamyl-phosphate reductase (343 aa).

C148 is an active-site residue.

It belongs to the NAGSA dehydrogenase family. Type 1 subfamily.

It localises to the cytoplasm. The catalysed reaction is N-acetyl-L-glutamate 5-semialdehyde + phosphate + NADP(+) = N-acetyl-L-glutamyl 5-phosphate + NADPH + H(+). It participates in amino-acid biosynthesis; L-arginine biosynthesis; N(2)-acetyl-L-ornithine from L-glutamate: step 3/4. Catalyzes the NADPH-dependent reduction of N-acetyl-5-glutamyl phosphate to yield N-acetyl-L-glutamate 5-semialdehyde. The protein is N-acetyl-gamma-glutamyl-phosphate reductase of Caldicellulosiruptor saccharolyticus (strain ATCC 43494 / DSM 8903 / Tp8T 6331).